We begin with the raw amino-acid sequence, 26 residues long: Conotoxin Eb6.17 (26 aa).

Intrachain disulfides connect Cys7-Cys18 and Cys13-Cys25.

The protein belongs to the conotoxin O1 superfamily. In terms of tissue distribution, expressed by the venom duct.

Its subcellular location is the secreted. The sequence is that of Conotoxin Eb6.17 (E1) from Conus ebraeus (Hebrew cone).